The sequence spans 229 residues: Octanoyltransferase (229 aa).

The region spanning 30–223 is the BPL/LPL catalytic domain; the sequence is PDTPDTIWLV…QLQQRAQAHP (194 aa). Residues 69–76, 141–143, and 154–156 contribute to the substrate site; these read RGGQITYH, ALG, and GVS. Cys-172 acts as the Acyl-thioester intermediate in catalysis.

Belongs to the LipB family.

The protein resides in the cytoplasm. It carries out the reaction octanoyl-[ACP] + L-lysyl-[protein] = N(6)-octanoyl-L-lysyl-[protein] + holo-[ACP] + H(+). Its pathway is protein modification; protein lipoylation via endogenous pathway; protein N(6)-(lipoyl)lysine from octanoyl-[acyl-carrier-protein]: step 1/2. Its function is as follows. Catalyzes the transfer of endogenously produced octanoic acid from octanoyl-acyl-carrier-protein onto the lipoyl domains of lipoate-dependent enzymes. Lipoyl-ACP can also act as a substrate although octanoyl-ACP is likely to be the physiological substrate. The sequence is that of Octanoyltransferase from Ralstonia pickettii (strain 12J).